The primary structure comprises 657 residues: Protein mono-ADP-ribosyltransferase TIPARP (657 aa).

A compositionally biased stretch (acidic residues) spans 1-10; sequence MEMETTEPEP. The interval 1–21 is disordered; it reads MEMETTEPEPDCVVQPPSPPD. Cys39 is modified (ADP-ribosylcysteine). A Nuclear localization signal motif is present at residues 41 to 47; that stretch reads KKKDQKR. The C3H1-type zinc finger occupies 237-264; it reads ENGIEICMDFLQGTCIYGRDCLKHHTVL. Residues 332-410 enclose the WWE domain; it reads STPPSSNVNS…RRPLFRSCFI (79 aa). One can recognise a PARP catalytic domain in the interval 449–657; sequence YPETWVYMHP…YEEVSNTVSI (209 aa).

The protein belongs to the ARTD/PARP family. As to quaternary structure, interacts with AHR. In terms of processing, auto-mono-ADP-ribosylated.

It localises to the nucleus. The catalysed reaction is L-aspartyl-[protein] + NAD(+) = 4-O-(ADP-D-ribosyl)-L-aspartyl-[protein] + nicotinamide. It carries out the reaction L-glutamyl-[protein] + NAD(+) = 5-O-(ADP-D-ribosyl)-L-glutamyl-[protein] + nicotinamide. It catalyses the reaction L-cysteinyl-[protein] + NAD(+) = S-(ADP-D-ribosyl)-L-cysteinyl-[protein] + nicotinamide + H(+). Its activity is regulated as follows. ADP-ribosyltransferase activity is inhibited by PJ34; inhibition is however not specific to TIPARP and other PARP-domain containing proteins are also inhibited by PJ34. Partially inhibited by KU0058948. ADP-ribosyltransferase that mediates mono-ADP-ribosylation of glutamate, aspartate and cysteine residues on target proteins. Acts as a negative regulator of AHR by mediating mono-ADP-ribosylation of AHR, leading to inhibit transcription activator activity of AHR. The polypeptide is Protein mono-ADP-ribosyltransferase TIPARP (Homo sapiens (Human)).